A 145-amino-acid chain; its full sequence is 3-dehydroquinate dehydratase (145 aa).

Tyr-24 functions as the Proton acceptor in the catalytic mechanism. The substrate site is built by Asn-75, His-81, and Asp-88. The active-site Proton donor is His-101. Residues Leu-102–Ser-103 and Arg-112 contribute to the substrate site.

This sequence belongs to the type-II 3-dehydroquinase family. As to quaternary structure, homododecamer.

It catalyses the reaction 3-dehydroquinate = 3-dehydroshikimate + H2O. Its pathway is metabolic intermediate biosynthesis; chorismate biosynthesis; chorismate from D-erythrose 4-phosphate and phosphoenolpyruvate: step 3/7. In terms of biological role, catalyzes a trans-dehydration via an enolate intermediate. The protein is 3-dehydroquinate dehydratase of Phenylobacterium zucineum (strain HLK1).